A 448-amino-acid polypeptide reads, in one-letter code: Putative diacyglycerol O-acyltransferase MT3848 (448 aa).

Residue His136 is the Proton acceptor of the active site.

It belongs to the long-chain O-acyltransferase family.

The catalysed reaction is an acyl-CoA + a 1,2-diacyl-sn-glycerol = a triacyl-sn-glycerol + CoA. Its pathway is glycerolipid metabolism; triacylglycerol biosynthesis. This chain is Putative diacyglycerol O-acyltransferase MT3848, found in Mycobacterium tuberculosis (strain CDC 1551 / Oshkosh).